We begin with the raw amino-acid sequence, 1161 residues long: MTFGTVLLLSVLASYHGFNLDVEEPTIFQEDAGGFGQSVVQFGGSRLVVGAPLEVVAANQTGRLYDCAAATGMCQPIPLHIRPEAVNMSLGLTLAASTNGSRLLACGPTLHRVCGENSYSKGSCLLLGSRWEIIQTVPDATPECPHQEMDIVFLIDGSGSIDQNDFNQMKGFVQAVMGQFEGTDTLFALMQYSNLLKIHFTFTQFRTSPSQQSLVDPIVQLKGLTFTATGILTVVTQLFHHKNGARKSAKKILIVITDGQKYKDPLEYSDVIPQAEKAGIIRYAIGVGHAFQGPTARQELNTISSAPPQDHVFKVDNFAALGSIQKQLQEKIYAVEGTQSRASSSFQHEMSQEGFSTALTMDGLFLGAVGSFSWSGGAFLYPPNMSPTFINMSQENVDMRDSYLGYSTELALWKGVQNLVLGAPRYQHTGKAVIFTQVSRQWRKKAEVTGTQIGSYFGASLCSVDVDSDGSTDLILIGAPHYYEQTRGGQVSVCPLPRGRVQWQCDAVLRGEQGHPWGRFGAALTVLGDVNEDKLIDVAIGAPGEQENRGAVYLFHGASESGISPSHSQRIASSQLSPRLQYFGQALSGGQDLTQDGLMDLAVGARGQVLLLRSLPVLKVGVAMRFSPVEVAKAVYRCWEEKPSALEAGDATVCLTIQKSSLDQLGDIQSSVRFDLALDPGRLTSRAIFNETKNPTLTRRKTLGLGIHCETLKLLLPDCVEDVVSPIILHLNFSLVREPIPSPQNLRPVLAVGSQDLFTASLPFEKNCGQDGLCEGDLGVTLSFSGLQTLTVGSSLELNVIVTVWNAGEDSYGTVVSLYYPAGLSHRRVSGAQKQPHQSALRLACETVPTEDEGLRSSRCSVNHPIFHEGSNGTFIVTFDVSYKATLGDRMLMRASASSENNKASSSKATFQLELPVKYAVYTMISRQEESTKYFNFATSDEKKMKEAEHRYRVNNLSQRDLAISINFWVPVLLNGVAVWDVVMEAPSQSLPCVSERKPPQHSDFLTQISRSPMLDCSIADCLQFRCDVPSFSVQEELDFTLKGNLSFGWVRETLQKKVLVVSVAEITFDTSVYSQLPGQEAFMRAQMEMVLEEDEVYNAIPIIMGSSVGALLLLALITATLYKLGFFKRHYKEMLEDKPEDTATFSGDDFSCVAPNVPLS.

The signal sequence occupies residues 1–17 (MTFGTVLLLSVLASYHG). The Extracellular segment spans residues 18-1099 (FNLDVEEPTI…MVLEEDEVYN (1082 aa)). FG-GAP repeat units follow at residues 19–76 (NLDV…MCQP) and 77–136 (IPLH…IIQT). A glycan (N-linked (GlcNAc...) asparagine) is linked at Asn59. A disulfide bridge links Cys67 with Cys74. Residues Asn87 and Asn99 are each glycosylated (N-linked (GlcNAc...) asparagine). Cysteines 106 and 124 form a disulfide. Positions 150–332 (DIVFLIDGSG…SIQKQLQEKI (183 aa)) constitute a VWFA domain. FG-GAP repeat units lie at residues 339-390 (QSRA…PTFI), 391-442 (NMSQ…SRQW), 443-503 (RKKA…RVQW), 506-564 (DAVL…SGIS), and 569-629 (QRIA…FSPV). Residue Asn391 is glycosylated (N-linked (GlcNAc...) asparagine). Residues Asp465, Asp467, Asp469, Asp473, Asp529, Asn531, Asp533, Asp537, Asp592, Asp596, and Asp600 each coordinate Ca(2+). Residues Cys654 and Cys709 are joined by a disulfide bond. Residues Asn690 and Asn732 are each glycosylated (N-linked (GlcNAc...) asparagine). 2 disulfides stabilise this stretch: Cys768–Cys774 and Cys845–Cys860. N-linked (GlcNAc...) asparagine glycans are attached at residues Asn872 and Asn956. 2 disulfides stabilise this stretch: Cys993/Cys1017 and Cys1022/Cys1027. Residue Asn1045 is glycosylated (N-linked (GlcNAc...) asparagine). Residues 1100 to 1120 (AIPIIMGSSVGALLLLALITA) form a helical membrane-spanning segment. The Cytoplasmic portion of the chain corresponds to 1121–1161 (TLYKLGFFKRHYKEMLEDKPEDTATFSGDDFSCVAPNVPLS). Residues 1126-1130 (GFFKR) carry the GFFKR motif motif.

It belongs to the integrin alpha chain family. In terms of assembly, heterodimer of an alpha and a beta subunit. Alpha-D associates with beta-2. As to expression, expressed moderately on myelomonocytic cell lines and subsets of peripheral blood leukocytes and strongly on tissue-specialized cells, including macrophages foam cells within atherosclerotic plaques, and on splenic red pulp macrophages.

The protein resides in the membrane. In terms of biological role, integrin alpha-D/beta-2 is a receptor for ICAM3 and VCAM1. May play a role in the atherosclerotic process such as clearing lipoproteins from plaques and in phagocytosis of blood-borne pathogens, particulate matter, and senescent erythrocytes from the blood. The chain is Integrin alpha-D (ITGAD) from Homo sapiens (Human).